The primary structure comprises 254 residues: Hydroxyacylglutathione hydrolase (254 aa).

Residues H53, H55, D57, H58, H111, D128, and H166 each contribute to the Zn(2+) site.

This sequence belongs to the metallo-beta-lactamase superfamily. Glyoxalase II family. In terms of assembly, monomer. Requires Zn(2+) as cofactor.

It catalyses the reaction an S-(2-hydroxyacyl)glutathione + H2O = a 2-hydroxy carboxylate + glutathione + H(+). It functions in the pathway secondary metabolite metabolism; methylglyoxal degradation; (R)-lactate from methylglyoxal: step 2/2. Its function is as follows. Thiolesterase that catalyzes the hydrolysis of S-D-lactoyl-glutathione to form glutathione and D-lactic acid. The protein is Hydroxyacylglutathione hydrolase of Aeromonas salmonicida (strain A449).